The chain runs to 136 residues: UPF0216 protein PF0452 (136 aa).

It belongs to the UPF0216 family.

This chain is UPF0216 protein PF0452, found in Pyrococcus furiosus (strain ATCC 43587 / DSM 3638 / JCM 8422 / Vc1).